Consider the following 260-residue polypeptide: DNA repair protein RecO (260 aa).

Belongs to the RecO family.

In terms of biological role, involved in DNA repair and RecF pathway recombination. The chain is DNA repair protein RecO from Salinibacter ruber (strain DSM 13855 / M31).